The chain runs to 197 residues: dITP/XTP pyrophosphatase (197 aa).

8–13 (TGNQGK) is a binding site for substrate. Catalysis depends on Asp69, which acts as the Proton acceptor. Asp69 provides a ligand contact to Mg(2+). Substrate is bound by residues Ser70, 154–157 (FGYD), Lys177, and 182–183 (HR).

Belongs to the HAM1 NTPase family. Homodimer. Mg(2+) is required as a cofactor.

It carries out the reaction XTP + H2O = XMP + diphosphate + H(+). It catalyses the reaction dITP + H2O = dIMP + diphosphate + H(+). The enzyme catalyses ITP + H2O = IMP + diphosphate + H(+). In terms of biological role, pyrophosphatase that catalyzes the hydrolysis of nucleoside triphosphates to their monophosphate derivatives, with a high preference for the non-canonical purine nucleotides XTP (xanthosine triphosphate), dITP (deoxyinosine triphosphate) and ITP. Seems to function as a house-cleaning enzyme that removes non-canonical purine nucleotides from the nucleotide pool, thus preventing their incorporation into DNA/RNA and avoiding chromosomal lesions. The chain is dITP/XTP pyrophosphatase from Photobacterium profundum (strain SS9).